The following is an 87-amino-acid chain: U3-theraphotoxin-Hhn1j (87 aa).

An N-terminal signal peptide occupies residues 1-24 (MVNMKASMFLTFAGLVLLFVVCYA). Positions 25 to 52 (SESEEKEFPKEMLSSIFAVDNDFKQEER) are excised as a propeptide. 3 disulfide bridges follow: Cys-54-Cys-67, Cys-61-Cys-72, and Cys-66-Cys-79.

The protein belongs to the neurotoxin 10 (Hwtx-1) family. 51 (Hntx-8) subfamily. Hntx-8 sub-subfamily. Expressed by the venom gland.

It is found in the secreted. In terms of biological role, ion channel inhibitor. This chain is U3-theraphotoxin-Hhn1j, found in Cyriopagopus hainanus (Chinese bird spider).